A 489-amino-acid polypeptide reads, in one-letter code: Glutamyl-tRNA(Gln) amidotransferase subunit A (489 aa).

Catalysis depends on charge relay system residues Lys-80 and Ser-160. Residue Ser-184 is the Acyl-ester intermediate of the active site.

Belongs to the amidase family. GatA subfamily. Heterotrimer of A, B and C subunits.

It catalyses the reaction L-glutamyl-tRNA(Gln) + L-glutamine + ATP + H2O = L-glutaminyl-tRNA(Gln) + L-glutamate + ADP + phosphate + H(+). Functionally, allows the formation of correctly charged Gln-tRNA(Gln) through the transamidation of misacylated Glu-tRNA(Gln) in organisms which lack glutaminyl-tRNA synthetase. The reaction takes place in the presence of glutamine and ATP through an activated gamma-phospho-Glu-tRNA(Gln). This Wolbachia sp. subsp. Brugia malayi (strain TRS) protein is Glutamyl-tRNA(Gln) amidotransferase subunit A.